The following is a 156-amino-acid chain: Small ribosomal subunit protein uS7 (156 aa).

It belongs to the universal ribosomal protein uS7 family. Part of the 30S ribosomal subunit. Contacts proteins S9 and S11.

In terms of biological role, one of the primary rRNA binding proteins, it binds directly to 16S rRNA where it nucleates assembly of the head domain of the 30S subunit. Is located at the subunit interface close to the decoding center, probably blocks exit of the E-site tRNA. The chain is Small ribosomal subunit protein uS7 from Staphylococcus saprophyticus subsp. saprophyticus (strain ATCC 15305 / DSM 20229 / NCIMB 8711 / NCTC 7292 / S-41).